Consider the following 334-residue polypeptide: S-adenosylmethionine decarboxylase proenzyme (334 aa).

Phe7 is a substrate binding site. Catalysis depends on residues Glu8 and Glu11. Glu67 provides a ligand contact to substrate. Ser68 acts as the Schiff-base intermediate with substrate; via pyruvic acid in catalysis. Ser68 carries the post-translational modification Pyruvic acid (Ser); by autocatalysis. Catalysis depends on Cys82, which acts as the Proton donor; for catalytic activity. Phe223 contributes to the substrate binding site. Residues Ser229 and His243 each act as proton acceptor; for processing activity in the active site. Residue Glu247 participates in substrate binding. Ser298 carries the phosphoserine modification.

This sequence belongs to the eukaryotic AdoMetDC family. In terms of assembly, heterotetramer of two alpha and two beta chains. Pyruvate serves as cofactor. In terms of processing, is synthesized initially as an inactive proenzyme. Formation of the active enzyme involves a self-maturation process in which the active site pyruvoyl group is generated from an internal serine residue via an autocatalytic post-translational modification. Two non-identical subunits are generated from the proenzyme in this reaction, and the pyruvate is formed at the N-terminus of the alpha chain, which is derived from the carboxyl end of the proenzyme. The post-translation cleavage follows an unusual pathway, termed non-hydrolytic serinolysis, in which the side chain hydroxyl group of the serine supplies its oxygen atom to form the C-terminus of the beta chain, while the remainder of the serine residue undergoes an oxidative deamination to produce ammonia and the pyruvoyl group blocking the N-terminus of the alpha chain.

The catalysed reaction is S-adenosyl-L-methionine + H(+) = S-adenosyl 3-(methylsulfanyl)propylamine + CO2. Its pathway is amine and polyamine biosynthesis; S-adenosylmethioninamine biosynthesis; S-adenosylmethioninamine from S-adenosyl-L-methionine: step 1/1. Its function is as follows. Essential for biosynthesis of the polyamines spermidine and spermine. Promotes maintenance and self-renewal of embryonic stem cells, by maintaining spermine levels. The polypeptide is S-adenosylmethionine decarboxylase proenzyme (AMD1) (Bos taurus (Bovine)).